The sequence spans 382 residues: Transforming growth factor beta-1 proprotein (382 aa).

A signal peptide spans 1 to 21; that stretch reads MEVLWMLLVLLVLHLSSLAMS. Positions 22-65 are straightjacket domain; the sequence is LSTCKAVDMEEVRKRRIEAIRGQILSKLKLDKTPDVDSEKMTVP. An arm domain region spans residues 66 to 263; that stretch reads SEAIFLYNST…SMPAERIDTV (198 aa). Asparagine 73, asparagine 123, and asparagine 166 each carry an N-linked (GlcNAc...) asparagine glycan. Residues 218-242 are bowtie tail; it reads PTPQAKDIDIEGFPALRGDLASLSS. The short motif at 234–236 is the Cell attachment site element; it reads RGD. 4 cysteine pairs are disulfide-bonded: cysteine 277–cysteine 286, cysteine 285–cysteine 348, cysteine 314–cysteine 379, and cysteine 318–cysteine 381.

Belongs to the TGF-beta family. Latency-associated peptide: Homodimer; disulfide-linked. Latency-associated peptide: Interacts with Transforming growth factor beta-1 (TGF-beta-1) chain; interaction is non-covalent and maintains (TGF-beta-1) in a latent state; each Latency-associated peptide (LAP) monomer interacts with TGF-beta-1 in the other monomer. Transforming growth factor beta-1: Homodimer; disulfide-linked. Transforming growth factor beta-1: Interacts with TGF-beta receptors (tgfbr1 and tgfbr2), leading to signal transduction. In terms of processing, transforming growth factor beta-1 proprotein: The precursor proprotein is cleaved in the Golgi apparatus to form Transforming growth factor beta-1 (TGF-beta-1) and Latency-associated peptide (LAP) chains, which remain non-covalently linked, rendering TGF-beta-1 inactive.

Its subcellular location is the secreted. The protein resides in the extracellular space. It localises to the extracellular matrix. In terms of biological role, transforming growth factor beta-1 proprotein: Precursor of the Latency-associated peptide (LAP) and Transforming growth factor beta-1 (TGF-beta-1) chains, which constitute the regulatory and active subunit of TGF-beta-1, respectively. Its function is as follows. Required to maintain the Transforming growth factor beta-1 (TGF-beta-1) chain in a latent state during storage in extracellular matrix. Associates non-covalently with TGF-beta-1 and regulates its activation via interaction with 'milieu molecules', such as LTBP1, LRRC32/GARP and LRRC33/NRROS, that control activation of TGF-beta-1. Interaction with integrins (ITGAV:ITGB6 or ITGAV:ITGB8) results in distortion of the Latency-associated peptide chain and subsequent release of the active TGF-beta-1. Transforming growth factor beta-1: Multifunctional protein that regulates the growth and differentiation of various cell types and is involved in various processes, such as normal development, immune function, microglia function and responses to neurodegeneration. Activation into mature form follows different steps: following cleavage of the proprotein in the Golgi apparatus, Latency-associated peptide (LAP) and Transforming growth factor beta-1 (TGF-beta-1) chains remain non-covalently linked rendering TGF-beta-1 inactive during storage in extracellular matrix. At the same time, LAP chain interacts with 'milieu molecules', such as ltbp1, lrrc32/garp and lrrc33/nrros that control activation of TGF-beta-1 and maintain it in a latent state during storage in extracellular milieus. TGF-beta-1 is released from LAP by integrins (ITGAV:ITGB6 or ITGAV:ITGB8): integrin-binding to LAP stabilizes an alternative conformation of the LAP bowtie tail and results in distortion of the LAP chain and subsequent release of the active TGF-beta-1. Once activated following release of LAP, TGF-beta-1 acts by binding to TGF-beta receptors (tgfbr1 and tgfbr2), which transduce signal. While expressed by many cells types, TGF-beta-1 only has a very localized range of action within cell environment thanks to fine regulation of its activation by Latency-associated peptide chain (LAP) and 'milieu molecules'. Plays an important role in bone remodeling: acts as a potent stimulator of osteoblastic bone formation. Can promote either T-helper 17 cells (Th17) or regulatory T-cells (Treg) lineage differentiation in a concentration-dependent manner. Can induce epithelial-to-mesenchymal transition (EMT) and cell migration in various cell types. This chain is Transforming growth factor beta-1 proprotein (tgfb1), found in Xenopus laevis (African clawed frog).